A 176-amino-acid polypeptide reads, in one-letter code: Inner membrane-spanning protein YciB (176 aa).

5 helical membrane-spanning segments follow: residues 23–43 (MIAA…FLYW), 50–70 (TMQW…IVLG), 74–94 (FIMW…WGSH), 119–139 (LTYM…FVFT), and 150–170 (MFGS…YLST).

It belongs to the YciB family.

Its subcellular location is the cell inner membrane. Plays a role in cell envelope biogenesis, maintenance of cell envelope integrity and membrane homeostasis. This Neisseria meningitidis serogroup A / serotype 4A (strain DSM 15465 / Z2491) protein is Inner membrane-spanning protein YciB.